A 75-amino-acid polypeptide reads, in one-letter code: Sec-independent protein translocase protein TatA (75 aa).

The helical transmembrane segment at 1–21 (MGSFSIWHWLIVLVIVVLVFG) threads the bilayer. Composition is skewed to basic and acidic residues over residues 43-54 (MRDSEKSGEDVQ) and 66-75 (ATDKSHTVSH). A disordered region spans residues 43-75 (MRDSEKSGEDVQQKIGGDTLDAQATDKSHTVSH).

Belongs to the TatA/E family. As to quaternary structure, the Tat system comprises two distinct complexes: a TatABC complex, containing multiple copies of TatA, TatB and TatC subunits, and a separate TatA complex, containing only TatA subunits. Substrates initially bind to the TatABC complex, which probably triggers association of the separate TatA complex to form the active translocon.

Its subcellular location is the cell inner membrane. In terms of biological role, part of the twin-arginine translocation (Tat) system that transports large folded proteins containing a characteristic twin-arginine motif in their signal peptide across membranes. TatA could form the protein-conducting channel of the Tat system. The polypeptide is Sec-independent protein translocase protein TatA (Aromatoleum aromaticum (strain DSM 19018 / LMG 30748 / EbN1) (Azoarcus sp. (strain EbN1))).